The primary structure comprises 430 residues: Signal recognition particle protein (430 aa).

GTP contacts are provided by residues 105-112 (GLQGSGKT), 187-191 (DTAGR), and 245-248 (TKLD).

The protein belongs to the GTP-binding SRP family. SRP54 subfamily. As to quaternary structure, part of the signal recognition particle protein translocation system, which is composed of SRP and FtsY.

The protein localises to the cytoplasm. It carries out the reaction GTP + H2O = GDP + phosphate + H(+). Its function is as follows. Involved in targeting and insertion of nascent membrane proteins into the cytoplasmic membrane. Binds to the hydrophobic signal sequence of the ribosome-nascent chain (RNC) as it emerges from the ribosomes. The SRP-RNC complex is then targeted to the cytoplasmic membrane where it interacts with the SRP receptor FtsY. In Thermus aquaticus, this protein is Signal recognition particle protein.